Here is a 386-residue protein sequence, read N- to C-terminus: NADH kinase pos5, mitochondrial (386 aa).

Residues 1–42 (MIRAANGFRISVRNTAVCLAPNFRQLKGFSIINLGSLQYFRY) constitute a mitochondrion transit peptide.

It belongs to the NAD kinase family.

Its subcellular location is the mitochondrion. The catalysed reaction is NADH + ATP = ADP + NADPH + H(+). Phosphorylates both NADH and NAD(+), with a preference for NADH. Anti-oxidant factor and key source of the cellular reductant NADPH. The sequence is that of NADH kinase pos5, mitochondrial (pos5) from Schizosaccharomyces pombe (strain 972 / ATCC 24843) (Fission yeast).